Consider the following 442-residue polypeptide: tRNA(Ile)-lysidine synthase (442 aa).

28 to 33 (SGGLDS) provides a ligand contact to ATP.

It belongs to the tRNA(Ile)-lysidine synthase family.

It is found in the cytoplasm. It catalyses the reaction cytidine(34) in tRNA(Ile2) + L-lysine + ATP = lysidine(34) in tRNA(Ile2) + AMP + diphosphate + H(+). Functionally, ligates lysine onto the cytidine present at position 34 of the AUA codon-specific tRNA(Ile) that contains the anticodon CAU, in an ATP-dependent manner. Cytidine is converted to lysidine, thus changing the amino acid specificity of the tRNA from methionine to isoleucine. This is tRNA(Ile)-lysidine synthase from Pseudomonas aeruginosa (strain ATCC 15692 / DSM 22644 / CIP 104116 / JCM 14847 / LMG 12228 / 1C / PRS 101 / PAO1).